We begin with the raw amino-acid sequence, 209 residues long: uncharacterized protein (209 aa).

Belongs to the flavoredoxin family. Requires FMN as cofactor.

This is an uncharacterized protein from Halalkalibacterium halodurans (strain ATCC BAA-125 / DSM 18197 / FERM 7344 / JCM 9153 / C-125) (Bacillus halodurans).